We begin with the raw amino-acid sequence, 182 residues long: Ribosome maturation factor RimM (182 aa).

The PRC barrel domain occupies 103–182 (EGDYYWKDLM…TIEVDWDPGF (80 aa)).

This sequence belongs to the RimM family. Binds ribosomal protein uS19.

The protein resides in the cytoplasm. An accessory protein needed during the final step in the assembly of 30S ribosomal subunit, possibly for assembly of the head region. Essential for efficient processing of 16S rRNA. May be needed both before and after RbfA during the maturation of 16S rRNA. It has affinity for free ribosomal 30S subunits but not for 70S ribosomes. The sequence is that of Ribosome maturation factor RimM from Klebsiella pneumoniae subsp. pneumoniae (strain ATCC 700721 / MGH 78578).